The sequence spans 433 residues: uncharacterized protein (433 aa).

11 helical membrane passes run 28-48, 56-76, 102-122, 126-146, 164-184, 207-227, 250-270, 304-324, 345-365, 375-395, and 406-426; these read FAALGPGILMASAAVGGSHII, IYGWQLAIIIILANLFKYPFF, IWIFFLLNVFATVINTAAVGL, AILTFVLPVQVPVPTLSFIVI, LSKLIMIALTITTVSAVIIAL, ALGFIVALMGWMPAPIEISAI, FNVGYIGTAILALVFLALGAL, GLIAFIAFMCMFGTTITVIDG, SYLNVAITFAALAGLAIIFYF, FAMIASFVSTPVFAYLNLSLV, and LLWLSLIGLMYLTSFTLLFIA.

The protein resides in the cell membrane. This is an uncharacterized protein from Pasteurella multocida (strain Pm70).